A 907-amino-acid polypeptide reads, in one-letter code: Protein translocase subunit SecA (907 aa).

ATP-binding positions include glutamine 87, 105–109 (GEGKT), and aspartate 512. A disordered region spans residues 862 to 885 (AENQLDDGHSSDQNHSPMVRDERK). The span at 867–885 (DDGHSSDQNHSPMVRDERK) shows a compositional bias: basic and acidic residues. Zn(2+) is bound by residues cysteine 892, cysteine 894, cysteine 903, and histidine 904.

Belongs to the SecA family. Monomer and homodimer. Part of the essential Sec protein translocation apparatus which comprises SecA, SecYEG and auxiliary proteins SecDF-YajC and YidC. Zn(2+) serves as cofactor.

Its subcellular location is the cell inner membrane. The protein resides in the cytoplasm. It catalyses the reaction ATP + H2O + cellular proteinSide 1 = ADP + phosphate + cellular proteinSide 2.. Its function is as follows. Part of the Sec protein translocase complex. Interacts with the SecYEG preprotein conducting channel. Has a central role in coupling the hydrolysis of ATP to the transfer of proteins into and across the cell membrane, serving both as a receptor for the preprotein-SecB complex and as an ATP-driven molecular motor driving the stepwise translocation of polypeptide chains across the membrane. In Aliivibrio salmonicida (strain LFI1238) (Vibrio salmonicida (strain LFI1238)), this protein is Protein translocase subunit SecA.